The sequence spans 214 residues: Adenylate kinase (214 aa).

Residue 10 to 15 (GAGKGT) coordinates ATP. Residues 30–59 (STGDMFREAVASKSELGKKVEEILKRGDLV) form an NMP region. Residues T31, R36, 57–59 (DLV), 85–88 (GFPR), and Q92 each bind AMP. The segment at 126-163 (NRRICSNCGKIYNLITLPPKVDGKCDVCGGTLYQREDD) is LID. R127 contributes to the ATP binding site. The Zn(2+) site is built by C130 and C133. 136-137 (IY) contributes to the ATP binding site. 2 residues coordinate Zn(2+): C150 and C153. Positions 160 and 171 each coordinate AMP. L199 contacts ATP.

It belongs to the adenylate kinase family. In terms of assembly, monomer.

It localises to the cytoplasm. It catalyses the reaction AMP + ATP = 2 ADP. The protein operates within purine metabolism; AMP biosynthesis via salvage pathway; AMP from ADP: step 1/1. Its function is as follows. Catalyzes the reversible transfer of the terminal phosphate group between ATP and AMP. Plays an important role in cellular energy homeostasis and in adenine nucleotide metabolism. This Thermosipho africanus (strain TCF52B) protein is Adenylate kinase.